A 337-amino-acid chain; its full sequence is Anthranilate phosphoribosyltransferase (337 aa).

Residues Gly80, 83–84 (GD), Thr88, 90–93 (NIST), 108–116 (KHGNRAVSS), and Ser120 each bind 5-phospho-alpha-D-ribose 1-diphosphate. Anthranilate is bound at residue Gly80. A Mg(2+)-binding site is contributed by Ser92. Residue Asn111 participates in anthranilate binding. Arg166 contacts anthranilate. Positions 224 and 225 each coordinate Mg(2+).

The protein belongs to the anthranilate phosphoribosyltransferase family. As to quaternary structure, homodimer. Mg(2+) serves as cofactor.

The catalysed reaction is N-(5-phospho-beta-D-ribosyl)anthranilate + diphosphate = 5-phospho-alpha-D-ribose 1-diphosphate + anthranilate. It participates in amino-acid biosynthesis; L-tryptophan biosynthesis; L-tryptophan from chorismate: step 2/5. Its function is as follows. Catalyzes the transfer of the phosphoribosyl group of 5-phosphorylribose-1-pyrophosphate (PRPP) to anthranilate to yield N-(5'-phosphoribosyl)-anthranilate (PRA). The polypeptide is Anthranilate phosphoribosyltransferase (Anaeromyxobacter sp. (strain K)).